Consider the following 371-residue polypeptide: Cathepsin W (371 aa).

The signal sequence occupies residues 1 to 21 (MTLTAHLSYFLVLLLAGQGLS). Positions 22–125 (DSLLTKDAGP…KVESNTWGES (104 aa)) are excised as a propeptide. N-linked (GlcNAc...) asparagine glycosylation is found at Asn48 and Asn112. Disulfide bonds link Cys148–Cys189, Cys182–Cys224, and Cys282–Cys347. Residue Cys151 is part of the active site. Residue Asn203 is glycosylated (N-linked (GlcNAc...) asparagine). Catalysis depends on residues His289 and Asn326. The N-linked (GlcNAc...) asparagine glycan is linked to Asn344.

The protein belongs to the peptidase C1 family.

It is found in the endoplasmic reticulum. May have a specific function in the mechanism or regulation of T-cell cytolytic activity. The sequence is that of Cathepsin W (Ctsw) from Mus musculus (Mouse).